We begin with the raw amino-acid sequence, 67 residues long: Large ribosomal subunit protein uL30 (67 aa).

Belongs to the universal ribosomal protein uL30 family. Part of the 50S ribosomal subunit.

The sequence is that of Large ribosomal subunit protein uL30 from Thermotoga neapolitana (strain ATCC 49049 / DSM 4359 / NBRC 107923 / NS-E).